The following is an 876-amino-acid chain: Alanine--tRNA ligase (876 aa).

Zn(2+) contacts are provided by His568, His572, Cys670, and His674.

The protein belongs to the class-II aminoacyl-tRNA synthetase family. Zn(2+) serves as cofactor.

It is found in the cytoplasm. It carries out the reaction tRNA(Ala) + L-alanine + ATP = L-alanyl-tRNA(Ala) + AMP + diphosphate. Functionally, catalyzes the attachment of alanine to tRNA(Ala) in a two-step reaction: alanine is first activated by ATP to form Ala-AMP and then transferred to the acceptor end of tRNA(Ala). Also edits incorrectly charged Ser-tRNA(Ala) and Gly-tRNA(Ala) via its editing domain. This Geobacter metallireducens (strain ATCC 53774 / DSM 7210 / GS-15) protein is Alanine--tRNA ligase.